The primary structure comprises 129 residues: MRHGNGLRKLNRTSSHRLAMLRNMSNSLLEHEVIKTTLPKAKELRMVVEPLITLGKKDNLANRRLAFNRTRDRDIVTKLFTELGPRYATRPGGYLRILKFGFRHGDNAPMALVELVDRPEVEETAVVAE.

This sequence belongs to the bacterial ribosomal protein bL17 family. In terms of assembly, part of the 50S ribosomal subunit. Contacts protein L32.

The polypeptide is Large ribosomal subunit protein bL17 (Polynucleobacter asymbioticus (strain DSM 18221 / CIP 109841 / QLW-P1DMWA-1) (Polynucleobacter necessarius subsp. asymbioticus)).